The sequence spans 91 residues: Small ribosomal subunit protein uS19 (91 aa).

The protein belongs to the universal ribosomal protein uS19 family.

In terms of biological role, protein S19 forms a complex with S13 that binds strongly to the 16S ribosomal RNA. The protein is Small ribosomal subunit protein uS19 of Opitutus terrae (strain DSM 11246 / JCM 15787 / PB90-1).